The primary structure comprises 89 residues: Putative regulatory protein CLL_A1210 (89 aa).

This sequence belongs to the RemA family.

The sequence is that of Putative regulatory protein CLL_A1210 from Clostridium botulinum (strain Eklund 17B / Type B).